We begin with the raw amino-acid sequence, 137 residues long: Venom allergen 4 (137 aa).

Residues 1 to 19 form the signal peptide; it reads MKTFVLVSCLLVFTQIIYA.

It belongs to the ant venom allergen 2/4 family. As to quaternary structure, monomer. As to expression, expressed by the venom gland.

It localises to the secreted. The polypeptide is Venom allergen 4 (Solenopsis invicta (Red imported fire ant)).